A 468-amino-acid chain; its full sequence is Cytochrome bd ubiquinol oxidase subunit 1 (468 aa).

9 consecutive transmembrane segments (helical) span residues 15-35 (TLFHFLFVPMSIGLVFMVALM), 51-71 (AKFWGHLFLINFAVGVVTGIL), 95-115 (LAIEALLAFFMESIFIGLWIF), 124-144 (IHALCIWLVSFGTIMSSFWIL), 177-197 (LWVEFPHVIFGALATGAFFIA), 219-239 (LAMIVGLCAGLGVGLSGHMQA), 331-351 (FRIMVGAGVVMILAALGGLWL), 366-386 (IMIALISFPFLANSAGWIMTE), and 416-436 (SIIAFGVMYMILGALLVFLFI). Heme b is bound at residue histidine 18. Histidine 183 is a binding site for heme b. Methionine 334 provides a ligand contact to heme b. Residues 448 to 468 (HHDVPVSTDPFSQEVYHGISS) form a disordered region.

This sequence belongs to the cytochrome ubiquinol oxidase subunit 1 family. Heterodimer of subunits I and II. Heme b is required as a cofactor. It depends on heme d cis-diol as a cofactor.

It is found in the cell membrane. It catalyses the reaction 2 a ubiquinol + O2(in) + 4 H(+)(in) = 2 a ubiquinone + 2 H2O(in) + 4 H(+)(out). This chain is Cytochrome bd ubiquinol oxidase subunit 1 (cydA), found in Bacillus subtilis (strain 168).